A 199-amino-acid chain; its full sequence is Small heat shock protein hspG4 (199 aa).

Residues 30 to 199 (NKRVDIIPSM…SSNTIKININ (170 aa)) enclose the sHSP domain. A disordered region spans residues 83–105 (KNQQQQQQQQQLENSNNKENDEP).

This sequence belongs to the small heat shock protein (HSP20) family.

The polypeptide is Small heat shock protein hspG4 (hspG4) (Dictyostelium discoideum (Social amoeba)).